Consider the following 596-residue polypeptide: MKNIRNFSIIAHIDHGKSTLADRLIQECGAVSSREMSSQIMDTMDIEKERGITIKAQSVRLNYTLDGQNFVLNLIDTPGHVDFSYEVSRSLASCEGALLVVDASQGVEAQTIANVYIALENNLEIIPVINKIDLPAADPQRVKDEIEHVIGLDCSGAIEVSAKTGAGINELLEAIVRRVPAPDANDALPTKALIYDSWFDNYLGALALVRIYDGEIKKNDEVLVMGTNKKHIVLDLMYPHPIAPIKTARIGTGEVGIIVLGLKNVSDVQVGDTITLAKNPTKEPVGGFERAKPFVFAGIYPIETDKFEDLRDALDKLKLNDSSISYEPETSIALGFGFRVGFLGLLHMEVIKERLEREFDLDLIATAPTVTYEVVQTDGQILRIQNPSQLPAVNKIEMIKEPYVRSTIITPTEFLGNIITLLNNRRGVQTKMDYITPERVLLEYDIPMNEIVMDFYDKLKSSTKGYASFDYEPSDYREGDLVKLDIKVAGETVDALSIIVPESKAQSKGRDFVKAMKEIVPRQLFEVAIQASIGNKIIARETVKSMGKNVTAKCYGGDITRKRKLLEKQKEGKKRMKAIGKVNLPQEAFLSVLKID.

The tr-type G domain occupies 2–183; that stretch reads KNIRNFSIIA…AIVRRVPAPD (182 aa). GTP contacts are provided by residues 14–19 and 130–133; these read DHGKST and NKID.

The protein belongs to the TRAFAC class translation factor GTPase superfamily. Classic translation factor GTPase family. LepA subfamily.

It is found in the cell inner membrane. The catalysed reaction is GTP + H2O = GDP + phosphate + H(+). Its function is as follows. Required for accurate and efficient protein synthesis under certain stress conditions. May act as a fidelity factor of the translation reaction, by catalyzing a one-codon backward translocation of tRNAs on improperly translocated ribosomes. Back-translocation proceeds from a post-translocation (POST) complex to a pre-translocation (PRE) complex, thus giving elongation factor G a second chance to translocate the tRNAs correctly. Binds to ribosomes in a GTP-dependent manner. The polypeptide is Elongation factor 4 (Campylobacter curvus (strain 525.92)).